A 430-amino-acid polypeptide reads, in one-letter code: Lipoyl synthase, mitochondrial (430 aa).

Residues 1–29 (MASPVPIQRLQAPLRRSLARAAALSTRSY) constitute a mitochondrion transit peptide. Residues 28–58 (SYATIPSGPSSQPTSQESSSAASASAPATKP) are compositionally biased toward low complexity. The interval 28–62 (SYATIPSGPSSQPTSQESSSAASASAPATKPRPTY) is disordered. [4Fe-4S] cluster is bound by residues cysteine 142, cysteine 147, cysteine 153, cysteine 173, cysteine 177, cysteine 180, and serine 390. One can recognise a Radical SAM core domain in the interval 156–379 (GSNKAAATAT…RQRALDMGFL (224 aa)).

This sequence belongs to the radical SAM superfamily. Lipoyl synthase family. The cofactor is [4Fe-4S] cluster.

The protein resides in the mitochondrion. It carries out the reaction [[Fe-S] cluster scaffold protein carrying a second [4Fe-4S](2+) cluster] + N(6)-octanoyl-L-lysyl-[protein] + 2 oxidized [2Fe-2S]-[ferredoxin] + 2 S-adenosyl-L-methionine + 4 H(+) = [[Fe-S] cluster scaffold protein] + N(6)-[(R)-dihydrolipoyl]-L-lysyl-[protein] + 4 Fe(3+) + 2 hydrogen sulfide + 2 5'-deoxyadenosine + 2 L-methionine + 2 reduced [2Fe-2S]-[ferredoxin]. It participates in protein modification; protein lipoylation via endogenous pathway; protein N(6)-(lipoyl)lysine from octanoyl-[acyl-carrier-protein]: step 2/2. In terms of biological role, catalyzes the radical-mediated insertion of two sulfur atoms into the C-6 and C-8 positions of the octanoyl moiety bound to the lipoyl domains of lipoate-dependent enzymes, thereby converting the octanoylated domains into lipoylated derivatives. This chain is Lipoyl synthase, mitochondrial, found in Neurospora crassa (strain ATCC 24698 / 74-OR23-1A / CBS 708.71 / DSM 1257 / FGSC 987).